The chain runs to 480 residues: ATP synthase subunit beta (480 aa).

152-159 (GGAGVGKT) provides a ligand contact to ATP.

It belongs to the ATPase alpha/beta chains family. In terms of assembly, F-type ATPases have 2 components, CF(1) - the catalytic core - and CF(0) - the membrane proton channel. CF(1) has five subunits: alpha(3), beta(3), gamma(1), delta(1), epsilon(1). CF(0) has three main subunits: a(1), b(2) and c(9-12). The alpha and beta chains form an alternating ring which encloses part of the gamma chain. CF(1) is attached to CF(0) by a central stalk formed by the gamma and epsilon chains, while a peripheral stalk is formed by the delta and b chains.

It is found in the cell membrane. It carries out the reaction ATP + H2O + 4 H(+)(in) = ADP + phosphate + 5 H(+)(out). Its function is as follows. Produces ATP from ADP in the presence of a proton gradient across the membrane. The catalytic sites are hosted primarily by the beta subunits. The sequence is that of ATP synthase subunit beta from Wolbachia sp. subsp. Brugia malayi (strain TRS).